Consider the following 282-residue polypeptide: Elongation factor Ts (282 aa).

An involved in Mg(2+) ion dislocation from EF-Tu region spans residues 80–83 (TDFV).

This sequence belongs to the EF-Ts family.

Its subcellular location is the cytoplasm. Its function is as follows. Associates with the EF-Tu.GDP complex and induces the exchange of GDP to GTP. It remains bound to the aminoacyl-tRNA.EF-Tu.GTP complex up to the GTP hydrolysis stage on the ribosome. The sequence is that of Elongation factor Ts from Chlamydia trachomatis serovar L2 (strain ATCC VR-902B / DSM 19102 / 434/Bu).